The primary structure comprises 102 residues: Small ribosomal subunit protein uS10 (102 aa).

It belongs to the universal ribosomal protein uS10 family. Part of the 30S ribosomal subunit.

In terms of biological role, involved in the binding of tRNA to the ribosomes. This chain is Small ribosomal subunit protein uS10, found in Leuconostoc citreum (strain KM20).